Reading from the N-terminus, the 144-residue chain is Large ribosomal subunit protein uL15 (144 aa).

Positions 1 to 54 are disordered; it reads MRLNTLSPAEGSKKAGKRLGRGIGSGLGKTGGRGHKGQKSRSGGGVRRGFEGGQ. The span at 21-31 shows a compositional bias: gly residues; that stretch reads RGIGSGLGKTG.

Belongs to the universal ribosomal protein uL15 family. Part of the 50S ribosomal subunit.

Binds to the 23S rRNA. This Salmonella arizonae (strain ATCC BAA-731 / CDC346-86 / RSK2980) protein is Large ribosomal subunit protein uL15.